The chain runs to 136 residues: Protein NrdI (136 aa).

The protein belongs to the NrdI family.

Probably involved in ribonucleotide reductase function. This Salmonella agona (strain SL483) protein is Protein NrdI.